The chain runs to 350 residues: UDP-glucose 4-epimerase (350 aa).

Position 7 to 38 (7 to 38 (KILVTGSAGFIGTHTVVQLLNNGFNVSIIDNF)) interacts with NAD(+). Serine 133 lines the substrate pocket. Tyrosine 157 (proton acceptor) is an active-site residue.

Belongs to the NAD(P)-dependent epimerase/dehydratase family. It depends on NAD(+) as a cofactor.

The enzyme catalyses UDP-alpha-D-glucose = UDP-alpha-D-galactose. Its pathway is carbohydrate metabolism; galactose metabolism. In Pisum sativum (Garden pea), this protein is UDP-glucose 4-epimerase (GALE).